Reading from the N-terminus, the 224-residue chain is Probable Brix domain-containing ribosomal biogenesis protein (224 aa).

The 196-residue stretch at 1-196 (MMLITTSHRP…IWIMEDGRRW (196 aa)) folds into the Brix domain.

Probably involved in the biogenesis of the ribosome. This Pyrococcus horikoshii (strain ATCC 700860 / DSM 12428 / JCM 9974 / NBRC 100139 / OT-3) protein is Probable Brix domain-containing ribosomal biogenesis protein.